The sequence spans 146 residues: Hemoglobin subunit beta (146 aa).

A Globin domain is found at 2–146 (HWTAEEKQLI…VAHALARKYH (145 aa)). Residues H63 and H92 each contribute to the heme b site.

Belongs to the globin family. In terms of assembly, heterotetramer of two alpha chains and two beta chains. Red blood cells.

Its function is as follows. Involved in oxygen transport from the lung to the various peripheral tissues. In Chloephaga melanoptera (Andean goose), this protein is Hemoglobin subunit beta (HBB).